Reading from the N-terminus, the 248-residue chain is Granzyme E (248 aa).

The N-terminal stretch at methionine 1–alanine 18 is a signal peptide. Positions glutamate 19–glutamate 20 are excised as a propeptide. Positions isoleucine 21–lysine 246 constitute a Peptidase S1 domain. A disulfide bridge connects residues cysteine 50 and cysteine 66. Histidine 65 serves as the catalytic Charge relay system. 2 N-linked (GlcNAc...) asparagine glycosylation sites follow: asparagine 68 and asparagine 102. The active-site Charge relay system is aspartate 109. Disulfide bonds link cysteine 143–cysteine 210 and cysteine 175–cysteine 189. N-linked (GlcNAc...) asparagine glycosylation occurs at asparagine 154. Catalysis depends on serine 204, which acts as the Charge relay system. N-linked (GlcNAc...) asparagine glycosylation occurs at asparagine 223.

The protein belongs to the peptidase S1 family. Granzyme subfamily.

It localises to the cytolytic granule. Its function is as follows. This enzyme is probably necessary for target cell lysis in cell-mediated immune responses. The polypeptide is Granzyme E (Gzme) (Mus musculus (Mouse)).